A 369-amino-acid chain; its full sequence is Replication factor C subunit 5 (369 aa).

The segment at 21 to 40 (INKGKDVVGFGPPPQSKATP) is disordered. 79–86 (GPPGTGKT) lines the ATP pocket.

It belongs to the activator 1 small subunits family. Heterotetramer of subunits RFC2, RFC3, RFC4 and RFC5 that can form a complex with RFC1.

It is found in the nucleus. In terms of biological role, functions in cell replication and proliferation. May be involved in chromatin assembly and remodeling. Plays a role in the negative control of pathogenesis-related gene expression and systemic acquired resistance (SAR). In Arabidopsis thaliana (Mouse-ear cress), this protein is Replication factor C subunit 5 (RFC5).